Here is a 373-residue protein sequence, read N- to C-terminus: ADP-forming sulfoacetate-CoA ligase subunit SauC (373 aa).

The ATP-grasp domain occupies 9-249 (KEAFREKGLP…YLQFNGDIAL (241 aa)). Position 35–97 (35–97 (FAEVGFPCVL…EEAVDIDREI (63 aa))) interacts with ATP. Mg(2+)-binding residues include glutamate 186 and asparagine 188.

The protein belongs to the succinate/malate CoA ligase beta subunit family. In terms of assembly, forms a complex with SauD. It depends on Mg(2+) as a cofactor.

It catalyses the reaction sulfoacetate + ATP + CoA = sulfoacetyl-CoA + ADP + phosphate. Functionally, involved in the degradation of sulfoacetate. Catalyzes the CoA- and ATP-dependent conversion of sulfoacetate to sulfoacetyl-CoA and ADP. Cannot use other sulfonic and carboxylic acids, and shows only residual activity with 3-sulfopropanoate and malonic acid. This is ADP-forming sulfoacetate-CoA ligase subunit SauC from Bilophila wadsworthia (strain 3_1_6).